A 501-amino-acid chain; its full sequence is Lycopene beta cyclase, chloroplastic (501 aa).

The transit peptide at 1 to 48 (MDTLLKTPNKLDFFIPQFHGFERLCSNNPYHSRVRLGVKKRAIKIVSS) directs the protein to the chloroplast. The residue at position 49 (V49) is an N-acetylvaline. 85-113 (LAIVGGGPAGLAVAQQVSEAGLSVCSIDP) contacts NAD(+).

Belongs to the lycopene cyclase family.

The protein localises to the plastid. Its subcellular location is the chloroplast. The catalysed reaction is a carotenoid psi-end group = a carotenoid beta-end derivative. Its pathway is carotenoid biosynthesis; beta-carotene biosynthesis. It participates in carotenoid biosynthesis; beta-zeacarotene biosynthesis. Functionally, involved in carotenoid biosynthesis. Catalyzes the double cyclization reaction which converts lycopene to beta-carotene and neurosporene to beta-zeacarotene. Major lycopene beta-cyclase that does not seem to be involved in neoxanthin synthesis. Involved in salt tolerance improvement by increasing synthesis of carotenoids, which impairs reactive oxygen species (ROS) and protects the photosynthetic system under salt stress. This Arabidopsis thaliana (Mouse-ear cress) protein is Lycopene beta cyclase, chloroplastic.